A 309-amino-acid chain; its full sequence is Homoserine O-succinyltransferase (309 aa).

C142 serves as the catalytic Acyl-thioester intermediate. Substrate is bound by residues K163 and S192. Catalysis depends on H235, which acts as the Proton acceptor. The active site involves E237. R249 contributes to the substrate binding site.

It belongs to the MetA family. In terms of assembly, homodimer.

It is found in the cytoplasm. It catalyses the reaction L-homoserine + succinyl-CoA = O-succinyl-L-homoserine + CoA. It participates in amino-acid biosynthesis; L-methionine biosynthesis via de novo pathway; O-succinyl-L-homoserine from L-homoserine: step 1/1. Functionally, transfers a succinyl group from succinyl-CoA to L-homoserine, forming succinyl-L-homoserine. The protein is Homoserine O-succinyltransferase of Escherichia fergusonii (strain ATCC 35469 / DSM 13698 / CCUG 18766 / IAM 14443 / JCM 21226 / LMG 7866 / NBRC 102419 / NCTC 12128 / CDC 0568-73).